The following is a 247-amino-acid chain: Granzyme B(G,H) (247 aa).

The N-terminal stretch at Met1–Ala18 is a signal peptide. The propeptide at Gly19–Glu20 is activation peptide. Residues Ile21 to Lys245 form the Peptidase S1 domain. Residues Cys49 and Cys65 are joined by a disulfide bond. His64 serves as the catalytic Charge relay system. Asn71 carries N-linked (GlcNAc...) asparagine glycosylation. Residue Asp108 is the Charge relay system of the active site. 2 cysteine pairs are disulfide-bonded: Cys142/Cys209 and Cys173/Cys188. N-linked (GlcNAc...) asparagine glycosylation is present at Asn182. Ser203 serves as the catalytic Charge relay system.

The protein belongs to the peptidase S1 family. Granzyme subfamily.

The protein resides in the secreted. It localises to the cytolytic granule. The catalysed reaction is Preferential cleavage: -Asp-|-Xaa- &gt;&gt; -Asn-|-Xaa- &gt; -Met-|-Xaa-, -Ser-|-Xaa-.. Its activity is regulated as follows. Inactivated by the serine protease inhibitor diisopropylfluorophosphate. Its function is as follows. Abundant protease in the cytosolic granules of cytotoxic T-cells and NK-cells which activates caspase-independent pyroptosis when delivered into the target cell through the immunological synapse. It cleaves after Asp. Once delivered into the target cell, acts by catalyzing cleavage of gasdermin-E (GSDME), releasing the pore-forming moiety of GSDME, thereby triggering pyroptosis and target cell death. Seems to be linked to an activation cascade of caspases (aspartate-specific cysteine proteases) responsible for apoptosis execution. Cleaves caspase-3 and -9 (CASP3 and CASP9, respectively) to give rise to active enzymes mediating apoptosis. Cleaves and activates CASP7 in response to bacterial infection, promoting plasma membrane repair. In Mus musculus (Mouse), this protein is Granzyme B(G,H) (Gzmb).